A 427-amino-acid chain; its full sequence is GTPase Obg (427 aa).

The region spanning 1 to 158 is the Obg domain; that stretch reads MFVDIAKIYV…LWVILELKVL (158 aa). One can recognise an OBG-type G domain in the interval 159 to 330; the sequence is ADVGLIGYPN…VLKRAYELLK (172 aa). Residues 165 to 172, 190 to 194, 212 to 215, 282 to 285, and 311 to 313 each bind GTP; these read GYPNVGKS, FTTKY, DIPG, NKMD, and SAA. Positions 172 and 192 each coordinate Mg(2+). Residues 347–427 enclose the OCT domain; sequence FVYYKKKDVK…ILDVEFEYYE (81 aa).

The protein belongs to the TRAFAC class OBG-HflX-like GTPase superfamily. OBG GTPase family. In terms of assembly, monomer. The cofactor is Mg(2+).

It localises to the cytoplasm. Functionally, an essential GTPase which binds GTP, GDP and possibly (p)ppGpp with moderate affinity, with high nucleotide exchange rates and a fairly low GTP hydrolysis rate. Plays a role in control of the cell cycle, stress response, ribosome biogenesis and in those bacteria that undergo differentiation, in morphogenesis control. The chain is GTPase Obg from Caldicellulosiruptor saccharolyticus (strain ATCC 43494 / DSM 8903 / Tp8T 6331).